A 105-amino-acid chain; its full sequence is Small ribosomal subunit protein uS10 (105 aa).

This sequence belongs to the universal ribosomal protein uS10 family. In terms of assembly, part of the 30S ribosomal subunit.

Functionally, involved in the binding of tRNA to the ribosomes. The polypeptide is Small ribosomal subunit protein uS10 (Rickettsia bellii (strain OSU 85-389)).